Here is a 118-residue protein sequence, read N- to C-terminus: Large ribosomal subunit protein uL18 (118 aa).

The protein belongs to the universal ribosomal protein uL18 family. In terms of assembly, part of the 50S ribosomal subunit; part of the 5S rRNA/L5/L18/L25 subcomplex. Contacts the 5S and 23S rRNAs.

Functionally, this is one of the proteins that bind and probably mediate the attachment of the 5S RNA into the large ribosomal subunit, where it forms part of the central protuberance. In Rickettsia bellii (strain OSU 85-389), this protein is Large ribosomal subunit protein uL18.